Reading from the N-terminus, the 155-residue chain is 6,7-dimethyl-8-ribityllumazine synthase (155 aa).

5-amino-6-(D-ribitylamino)uracil-binding positions include F22, 56–58 (AFE), and 80–82 (AVI). A (2S)-2-hydroxy-3-oxobutyl phosphate-binding site is contributed by 85–86 (ST). H88 (proton donor) is an active-site residue. F113 lines the 5-amino-6-(D-ribitylamino)uracil pocket. R127 provides a ligand contact to (2S)-2-hydroxy-3-oxobutyl phosphate.

Belongs to the DMRL synthase family.

The catalysed reaction is (2S)-2-hydroxy-3-oxobutyl phosphate + 5-amino-6-(D-ribitylamino)uracil = 6,7-dimethyl-8-(1-D-ribityl)lumazine + phosphate + 2 H2O + H(+). Its pathway is cofactor biosynthesis; riboflavin biosynthesis; riboflavin from 2-hydroxy-3-oxobutyl phosphate and 5-amino-6-(D-ribitylamino)uracil: step 1/2. Catalyzes the formation of 6,7-dimethyl-8-ribityllumazine by condensation of 5-amino-6-(D-ribitylamino)uracil with 3,4-dihydroxy-2-butanone 4-phosphate. This is the penultimate step in the biosynthesis of riboflavin. In Bifidobacterium longum subsp. infantis (strain ATCC 15697 / DSM 20088 / JCM 1222 / NCTC 11817 / S12), this protein is 6,7-dimethyl-8-ribityllumazine synthase.